The sequence spans 1715 residues: Ubiquitin carboxyl-terminal hydrolase 32 (1715 aa).

EF-hand domains follow at residues 161-196 (IPKN…ACRG) and 197-232 (PGVE…LLLV). 9 residues coordinate Ca(2+): Asp174, Asn176, Asp178, His180, Glu185, Asp210, Asp212, Asp214, and Glu221. Positions 314–492 (QCKHMENDIV…DNLPLPRQVI (179 aa)) constitute a DUSP domain. The interval 393–429 (QHDSYSLGSGTGSASGSGSASSGISAGRHCGPVRPGP) is disordered. The segment covering 408–419 (GSGSASSGISAG) has biased composition (low complexity). A USP domain is found at 677 to 1675 (TGLHNLGNTC…AAYLLFYERK (999 aa)). Cys686 functions as the Nucleophile in the catalytic mechanism. Composition is skewed to polar residues over residues 1103-1126 (TESN…SSLT) and 1150-1164 (YRTS…STGH). 2 disordered regions span residues 1103-1213 (TESN…PHKA) and 1536-1569 (DEID…GNIL). Positions 1171 to 1180 (DVDEQAEEGN) are enriched in acidic residues. Over residues 1188 to 1209 (DQITTSQPETSSGVYSRRSSQP) the composition is skewed to polar residues. Residues 1540–1549 (APSKEVKEEL) are compositionally biased toward basic and acidic residues. Positions 1550-1559 (PNQTGSTKAT) are enriched in polar residues. His1633 serves as the catalytic Proton acceptor.

It belongs to the peptidase C19 family. USP20/USP33 subfamily.

It carries out the reaction Thiol-dependent hydrolysis of ester, thioester, amide, peptide and isopeptide bonds formed by the C-terminal Gly of ubiquitin (a 76-residue protein attached to proteins as an intracellular targeting signal).. Deubiquitinating enzyme that acts as an inhibitor of mitophagy probably by counteracting the action of park. Possibly functions by hydrolyzing ubiquitin attached by park on target proteins, thereby reducing park's ability to drive mitophagy. The chain is Ubiquitin carboxyl-terminal hydrolase 32 from Drosophila melanogaster (Fruit fly).